The primary structure comprises 228 residues: Aquaporin Z (228 aa).

2 consecutive transmembrane segments (helical) span residues M1–G21 and A23–F43. The NPA 1 motif lies at N63–A65. The next 3 helical transmembrane spans lie at I82–I102, M129–G149, and L154–V174. An NPA 2 motif is present at residues N184–A186. Residues L205–L225 traverse the membrane as a helical segment.

The protein belongs to the MIP/aquaporin (TC 1.A.8) family. As to quaternary structure, homotetramer.

Its subcellular location is the cell inner membrane. It carries out the reaction H2O(in) = H2O(out). Functionally, channel that permits osmotically driven movement of water in both directions. It is involved in the osmoregulation and in the maintenance of cell turgor during volume expansion in rapidly growing cells. It mediates rapid entry or exit of water in response to abrupt changes in osmolarity. This chain is Aquaporin Z, found in Brucella abortus biovar 1 (strain 9-941).